Consider the following 55-residue polypeptide: Conotoxin Cal22d (55 aa).

Positions 1–5 (GRPSA) are excised as a propeptide.

In terms of processing, contains 4 disulfide bonds. In terms of tissue distribution, expressed by the venom duct.

The protein resides in the secreted. Probable neurotoxin with unknown target. Possibly targets ion channels. In Californiconus californicus (California cone), this protein is Conotoxin Cal22d.